Reading from the N-terminus, the 230-residue chain is Large ribosomal subunit protein uL1 (230 aa).

This sequence belongs to the universal ribosomal protein uL1 family. Part of the 50S ribosomal subunit.

Its function is as follows. Binds directly to 23S rRNA. The L1 stalk is quite mobile in the ribosome, and is involved in E site tRNA release. Functionally, protein L1 is also a translational repressor protein, it controls the translation of the L11 operon by binding to its mRNA. In Leptospira biflexa serovar Patoc (strain Patoc 1 / Ames), this protein is Large ribosomal subunit protein uL1.